A 465-amino-acid polypeptide reads, in one-letter code: Trigger factor (465 aa).

Residues 164-245 enclose the PPIase FKBP-type domain; sequence GDFVSIDLSA…VQSVKERELP (82 aa). Residues 430-465 are disordered; that stretch reads GNTVDTAEMFGEPAAEPEQADAAQAGDAEKAAADSE. Positions 440–455 are enriched in low complexity; it reads GEPAAEPEQADAAQAG. Positions 456–465 are enriched in basic and acidic residues; that stretch reads DAEKAAADSE.

It belongs to the FKBP-type PPIase family. Tig subfamily.

Its subcellular location is the cytoplasm. It carries out the reaction [protein]-peptidylproline (omega=180) = [protein]-peptidylproline (omega=0). Functionally, involved in protein export. Acts as a chaperone by maintaining the newly synthesized protein in an open conformation. Functions as a peptidyl-prolyl cis-trans isomerase. The chain is Trigger factor from Nocardia farcinica (strain IFM 10152).